Here is a 450-residue protein sequence, read N- to C-terminus: Glucose-6-phosphate isomerase (450 aa).

The residue at position 39 (Thr-39) is a Phosphothreonine. Residue Glu-291 is the Proton donor of the active site. Active-site residues include His-312 and Lys-426.

This sequence belongs to the GPI family.

It is found in the cytoplasm. It carries out the reaction alpha-D-glucose 6-phosphate = beta-D-fructose 6-phosphate. It functions in the pathway carbohydrate biosynthesis; gluconeogenesis. It participates in carbohydrate degradation; glycolysis; D-glyceraldehyde 3-phosphate and glycerone phosphate from D-glucose: step 2/4. In terms of biological role, catalyzes the reversible isomerization of glucose-6-phosphate to fructose-6-phosphate. The sequence is that of Glucose-6-phosphate isomerase from Bacillus cereus (strain AH187).